The following is a 373-amino-acid chain: GPN-loop GTPase 1 (373 aa).

The residue at position 2 (A2) is an N-acetylalanine. 29 to 34 (GSGKTT) contacts GTP. A Gly-Pro-Asn (GPN)-loop; involved in dimer interface motif is present at residues 86 to 88 (GPN). 189–192 (NKTD) is a GTP binding site. Phosphoserine is present on residues S301, S312, and S314. The tract at residues 304 to 373 (LDTGTATGSS…SMAQYWKKNK (70 aa)) is disordered. Phosphothreonine is present on T328. The segment covering 330–342 (DEEDEEADSDTDD) has biased composition (acidic residues). S338 is modified (phosphoserine). T340 carries the phosphothreonine modification. Residues 343-355 (IDHRVTEESREEP) show a composition bias toward basic and acidic residues.

Belongs to the GPN-loop GTPase family. As to quaternary structure, heterodimer with GPN3. Binds to RNA polymerase II (RNAPII). Interacts directly with RNAPII subunits RPB4 and RPB7 and the CTD of RPB1. Interacts with XPA.

It is found in the cytoplasm. The protein localises to the nucleus. Its function is as follows. Small GTPase required for proper nuclear import of RNA polymerase II (RNAPII). May act at an RNAP assembly step prior to nuclear import. Forms an interface between the RNA polymerase II enzyme and chaperone/scaffolding proteins, suggesting that it is required to connect RNA polymerase II to regulators of protein complex formation. May be involved in nuclear localization of XPA. The protein is GPN-loop GTPase 1 of Bos taurus (Bovine).